Consider the following 301-residue polypeptide: Pyridoxal 5'-phosphate synthase subunit PdxS (301 aa).

Aspartate 31 provides a ligand contact to D-ribose 5-phosphate. The active-site Schiff-base intermediate with D-ribose 5-phosphate is the lysine 88. A D-ribose 5-phosphate-binding site is contributed by glycine 160. Lysine 172 serves as a coordination point for D-glyceraldehyde 3-phosphate. D-ribose 5-phosphate is bound by residues glycine 221 and 242 to 243 (GS).

This sequence belongs to the PdxS/SNZ family. In terms of assembly, in the presence of PdxT, forms a dodecamer of heterodimers.

The enzyme catalyses aldehydo-D-ribose 5-phosphate + D-glyceraldehyde 3-phosphate + L-glutamine = pyridoxal 5'-phosphate + L-glutamate + phosphate + 3 H2O + H(+). Its pathway is cofactor biosynthesis; pyridoxal 5'-phosphate biosynthesis. Catalyzes the formation of pyridoxal 5'-phosphate from ribose 5-phosphate (RBP), glyceraldehyde 3-phosphate (G3P) and ammonia. The ammonia is provided by the PdxT subunit. Can also use ribulose 5-phosphate and dihydroxyacetone phosphate as substrates, resulting from enzyme-catalyzed isomerization of RBP and G3P, respectively. This Methanosarcina mazei (strain ATCC BAA-159 / DSM 3647 / Goe1 / Go1 / JCM 11833 / OCM 88) (Methanosarcina frisia) protein is Pyridoxal 5'-phosphate synthase subunit PdxS.